The sequence spans 475 residues: Sulfate adenylyltransferase subunit 1 (475 aa).

The tr-type G domain occupies 25–239; sequence KSLLRFLTCG…EVLETVEIQR (215 aa). The G1 stretch occupies residues 34-41; that stretch reads GSVDDGKS. 34-41 lines the GTP pocket; sequence GSVDDGKS. The G2 stretch occupies residues 92-96; it reads GITID. Positions 113 to 116 are G3; it reads DTPG. Residues 113-117 and 168-171 each bind GTP; these read DTPGH and NKMD. The segment at 168–171 is G4; the sequence is NKMD. A G5 region spans residues 206–208; sequence SAL.

The protein belongs to the TRAFAC class translation factor GTPase superfamily. Classic translation factor GTPase family. CysN/NodQ subfamily. In terms of assembly, heterodimer composed of CysD, the smaller subunit, and CysN.

It carries out the reaction sulfate + ATP + H(+) = adenosine 5'-phosphosulfate + diphosphate. It functions in the pathway sulfur metabolism; hydrogen sulfide biosynthesis; sulfite from sulfate: step 1/3. Its function is as follows. With CysD forms the ATP sulfurylase (ATPS) that catalyzes the adenylation of sulfate producing adenosine 5'-phosphosulfate (APS) and diphosphate, the first enzymatic step in sulfur assimilation pathway. APS synthesis involves the formation of a high-energy phosphoric-sulfuric acid anhydride bond driven by GTP hydrolysis by CysN coupled to ATP hydrolysis by CysD. The protein is Sulfate adenylyltransferase subunit 1 of Shigella boydii serotype 18 (strain CDC 3083-94 / BS512).